A 387-amino-acid chain; its full sequence is 2-deoxystreptamine glucosyltransferase (387 aa).

This sequence belongs to the glycosyltransferase group 1 family.

It catalyses the reaction 2-deoxystreptamine + UDP-N-acetyl-alpha-D-glucosamine = 2'-N-acetylparomamine + UDP + H(+). The catalysed reaction is 2-deoxystreptamine + UDP-alpha-D-glucose = 2'-deamino-2'-hydroxyparomamine + UDP + H(+). Its pathway is antibiotic biosynthesis; kanamycin biosynthesis. Its function is as follows. Glycosyltransferase involved in the biosynthesis of kanamycin by mediating conversion of 2-deoxystreptamine (2-DOS) to 2'-N-acetylparomamine using UDP-alpha-D-glucose as sugar donor. Can also accept UDP-alpha-D-glucosamine, but with a much lower activity compared to UDP-alpha-D-glucose. This is 2-deoxystreptamine glucosyltransferase (kanF) from Streptomyces kanamyceticus.